The primary structure comprises 66 residues: Putative membrane protein insertion efficiency factor (66 aa).

Belongs to the UPF0161 family.

Its subcellular location is the cell inner membrane. Functionally, could be involved in insertion of integral membrane proteins into the membrane. The protein is Putative membrane protein insertion efficiency factor of Parasynechococcus marenigrum (strain WH8102).